Here is a 205-residue protein sequence, read N- to C-terminus: ATP-dependent dethiobiotin synthetase BioD (205 aa).

Threonine 16 is a Mg(2+) binding site. Lysine 32 is an active-site residue. Threonine 36 provides a ligand contact to substrate. Glutamate 97 lines the Mg(2+) pocket. 97-100 (EGAG) is an ATP binding site.

It belongs to the dethiobiotin synthetase family. In terms of assembly, homodimer. The cofactor is Mg(2+).

It localises to the cytoplasm. It catalyses the reaction (7R,8S)-7,8-diammoniononanoate + CO2 + ATP = (4R,5S)-dethiobiotin + ADP + phosphate + 3 H(+). It participates in cofactor biosynthesis; biotin biosynthesis; biotin from 7,8-diaminononanoate: step 1/2. Catalyzes a mechanistically unusual reaction, the ATP-dependent insertion of CO2 between the N7 and N8 nitrogen atoms of 7,8-diaminopelargonic acid (DAPA, also called 7,8-diammoniononanoate) to form a ureido ring. In Paramagnetospirillum magneticum (strain ATCC 700264 / AMB-1) (Magnetospirillum magneticum), this protein is ATP-dependent dethiobiotin synthetase BioD.